The sequence spans 115 residues: U3-lycotoxin-Ls1d (115 aa).

An N-terminal signal peptide occupies residues 1–20 (MKFVLLFGVLLVTLFSYSSA). Positions 21 to 44 (EMLDDFDQADEDELLSLIEKEEAR) are excised as a propeptide. 4 cysteine pairs are disulfide-bonded: Cys-48-Cys-63, Cys-55-Cys-72, Cys-62-Cys-87, and Cys-74-Cys-85.

It belongs to the neurotoxin 19 (CSTX) family. 01 subfamily. In terms of tissue distribution, expressed by the venom gland.

The protein resides in the secreted. This Lycosa singoriensis (Wolf spider) protein is U3-lycotoxin-Ls1d.